The following is a 239-amino-acid chain: Ribonuclease P protein component 3 (239 aa).

Belongs to the eukaryotic/archaeal RNase P protein component 3 family. As to quaternary structure, consists of a catalytic RNA component and at least 4-5 protein subunits.

It is found in the cytoplasm. It carries out the reaction Endonucleolytic cleavage of RNA, removing 5'-extranucleotides from tRNA precursor.. Part of ribonuclease P, a protein complex that generates mature tRNA molecules by cleaving their 5'-ends. This is Ribonuclease P protein component 3 from Methanosarcina barkeri (strain Fusaro / DSM 804).